A 346-amino-acid chain; its full sequence is Putative D-alanine--D-lactate ligase (346 aa).

The ATP-grasp domain maps to 137-338 (YVVARSAGIA…LSEVIDRTLS (202 aa)). Residue 163–216 (RLTYPVFVKPARSGSSFGVSKVCRPEDLATAVESARRYDTKVLIEAAVVGSEVG) participates in ATP binding. Residues Asp292, Glu305, and Asn307 each coordinate Mg(2+).

The protein belongs to the D-alanine--D-alanine ligase family. Mg(2+) is required as a cofactor. Requires Mn(2+) as cofactor.

It localises to the cell membrane. Its function is as follows. Required for resistance to glycopeptides antibiotics. D-Ala--D-Ala ligase of altered specificity which catalyzes ester bond formation between D-Ala and various D-hydroxy acids; producing a peptidoglycan which does not terminate by D-alanine but by D-lactate, thus preventing vancomycin binding. The sequence is that of Putative D-alanine--D-lactate ligase from Streptomyces coelicolor (strain ATCC BAA-471 / A3(2) / M145).